A 472-amino-acid chain; its full sequence is Tryptophanase (472 aa).

An N6-(pyridoxal phosphate)lysine modification is found at K270.

It belongs to the beta-eliminating lyase family. In terms of assembly, homotetramer. Pyridoxal 5'-phosphate is required as a cofactor.

It carries out the reaction L-tryptophan + H2O = indole + pyruvate + NH4(+). It functions in the pathway amino-acid degradation; L-tryptophan degradation via pyruvate pathway; indole and pyruvate from L-tryptophan: step 1/1. In Vibrio cholerae serotype O1 (strain ATCC 39315 / El Tor Inaba N16961), this protein is Tryptophanase (tnaA).